Here is a 447-residue protein sequence, read N- to C-terminus: Polyamine export protein (447 aa).

At 1–4 the chain is on the cytoplasmic side; the sequence is MLNS. In terms of domain architecture, CNNM transmembrane spans 1-197; sequence MLNSILVILC…ALAGVLRKQE (197 aa). A helical membrane pass occupies residues 5-25; sequence ILVILCLIAVSAFFSMSEISL. Residues 26–54 are Periplasmic-facing; sequence AASRKIKLKLLADEGNINAQRVLNMQENP. A helical membrane pass occupies residues 55-75; that stretch reads GMFFTVVQIGLNAVAILGGIV. At 76–99 the chain is on the cytoplasmic side; sequence GDAAFSPAFHSLFSRYMSAELSEQ. The chain crosses the membrane as a helical span at residues 100–120; the sequence is LSFILSFSLVTGMFILFADLT. Topologically, residues 121–141 are periplasmic; the sequence is PKRIGMIAPEAVALRIINPMR. The chain crosses the membrane as a helical span at residues 142–162; it reads FCLYVCTPLVWFFNGLANIIF. The Cytoplasmic segment spans residues 163–447; that stretch reads RIFKLPMVRK…DAKDKEESVA (285 aa). CBS domains are found at residues 216 to 275 and 282 to 343; these read MTPR…NQSL and QIRN…GLEE.

It belongs to the UPF0053 family. PaeA subfamily.

Its subcellular location is the cell inner membrane. Its function is as follows. Involved in cadaverine and putrescine tolerance in stationary phase. May facilitate the efflux of both cadaverine and putrescine from the cytoplasm, reducing potentially toxic levels under certain stress conditions. In Escherichia coli O157:H7, this protein is Polyamine export protein.